We begin with the raw amino-acid sequence, 394 residues long: Acid ceramidase (394 aa).

A signal peptide spans 1 to 20 (MLGRSLLTWVLAAAVTCAQA). Cysteine 30 and cysteine 339 form a disulfide bridge. Cysteine 142 serves as the catalytic Nucleophile. Asparagine 194, asparagine 258, asparagine 285, and asparagine 341 each carry an N-linked (GlcNAc...) asparagine glycan. A disulfide bond links cysteine 387 and cysteine 391.

The protein belongs to the acid ceramidase family. In terms of assembly, heterodimer; disulfide-linked. The heterodimer is composed of the disulfide-linked alpha and beta chains produced by autocatalytic cleavage of the precursor. N-glycosylated. In terms of processing, proteolytically cleaved into two chains alpha and beta that remain associated via a disulfide bond. Cleavage gives rise to a conformation change that activates the enzyme. The same catalytic Cys residue mediates the autoproteolytic cleavage and subsequent hydrolysis of lipid substrates. The beta chain may undergo an additional C-terminal processing.

It is found in the lysosome. It localises to the secreted. The catalysed reaction is an N-acylsphing-4-enine + H2O = sphing-4-enine + a fatty acid. The enzyme catalyses N-dodecanoylsphing-4-enine + H2O = dodecanoate + sphing-4-enine. It catalyses the reaction N-tetradecanoylsphing-4-enine + H2O = tetradecanoate + sphing-4-enine. It carries out the reaction N-hexadecanoylsphing-4-enine + H2O = sphing-4-enine + hexadecanoate. The catalysed reaction is N-octadecanoylsphing-4-enine + H2O = sphing-4-enine + octadecanoate. The enzyme catalyses N-dodecanoyl-(4R)-hydroxysphinganine + H2O = (4R)-hydroxysphinganine + dodecanoate. It catalyses the reaction N-(dodecanoyl)-sphinganine + H2O = dodecanoate + sphinganine. It carries out the reaction N-(acetyl)-sphing-4-enine + H2O = sphing-4-enine + acetate. The catalysed reaction is N-(hexanoyl)sphing-4-enine + H2O = hexanoate + sphing-4-enine. The enzyme catalyses N-octanoylsphing-4-enine + H2O = octanoate + sphing-4-enine. It catalyses the reaction N-(9Z-octadecenoyl)-sphing-4-enine + H2O = sphing-4-enine + (9Z)-octadecenoate. It carries out the reaction N-dodecanoylethanolamine + H2O = dodecanoate + ethanolamine. It functions in the pathway lipid metabolism; sphingolipid metabolism. Lysosomal ceramidase that hydrolyzes sphingolipid ceramides into sphingosine and free fatty acids at acidic pH. Ceramides, sphingosine, and its phosphorylated form sphingosine-1-phosphate are bioactive lipids that mediate cellular signaling pathways regulating several biological processes including cell proliferation, apoptosis and differentiation. Has a higher catalytic efficiency towards C12-ceramides versus other ceramides. Also catalyzes the reverse reaction allowing the synthesis of ceramides from fatty acids and sphingosine. For the reverse synthetic reaction, the natural sphingosine D-erythro isomer is more efficiently utilized as a substrate compared to D-erythro-dihydrosphingosine and D-erythro-phytosphingosine, while the fatty acids with chain lengths of 12 or 14 carbons are the most efficiently used. Also has an N-acylethanolamine hydrolase activity. By regulating the levels of ceramides, sphingosine and sphingosine-1-phosphate in the epidermis, mediates the calcium-induced differentiation of epidermal keratinocytes. Also indirectly regulates tumor necrosis factor/TNF-induced apoptosis. By regulating the intracellular balance between ceramides and sphingosine, in adrenocortical cells, probably also acts as a regulator of steroidogenesis. This is Acid ceramidase from Rattus norvegicus (Rat).